A 721-amino-acid polypeptide reads, in one-letter code: Probable acyl-activating enzyme 17, peroxisomal (721 aa).

A Microbody targeting signal motif is present at residues 719-721 (SKL).

This sequence belongs to the ATP-dependent AMP-binding enzyme family. In terms of tissue distribution, expressed in leaves, stems and developing seeds.

Its subcellular location is the peroxisome. In terms of biological role, may act as an acid--thiol ligase that activates carboxylic acids by forming acyl-CoAs. The polypeptide is Probable acyl-activating enzyme 17, peroxisomal (AAE17) (Arabidopsis thaliana (Mouse-ear cress)).